Reading from the N-terminus, the 402-residue chain is Enoyl-[acyl-carrier-protein] reductase [NADH] (402 aa).

Residues 48–53 (GASSGY), 74–75 (FE), 111–112 (DA), and 140–141 (LA) each bind NAD(+). Tyr-226 serves as a coordination point for substrate. Tyr-236 acts as the Proton donor in catalysis. Residues Lys-245 and 274-276 (VVT) each bind NAD(+).

This sequence belongs to the TER reductase family. In terms of assembly, monomer.

It carries out the reaction a 2,3-saturated acyl-[ACP] + NAD(+) = a (2E)-enoyl-[ACP] + NADH + H(+). The enzyme catalyses a 2,3-saturated acyl-CoA + NAD(+) = a (2E)-enoyl-CoA + NADH + H(+). Its pathway is lipid metabolism; fatty acid biosynthesis. Involved in the final reduction of the elongation cycle of fatty acid synthesis (FAS II). Catalyzes the reduction of a carbon-carbon double bond in an enoyl moiety that is covalently linked to an acyl carrier protein (ACP). It can also use crotonyl-CoA. The chain is Enoyl-[acyl-carrier-protein] reductase [NADH] from Xanthomonas oryzae pv. oryzae (strain MAFF 311018).